Here is a 321-residue protein sequence, read N- to C-terminus: NADH-ubiquinone oxidoreductase chain 1 (321 aa).

Transmembrane regions (helical) follow at residues 9–29 (ITNSLLYILSILIAVAFLTLL), 75–95 (ILFTLSPIMALILALTSWAPM), 106–126 (LGLLFIMAMSGMFTYAILWSG), 151–171 (TLGLIIISMAILSGGYSLMLF), 177–197 (HMWLLLSSWPLAMMWFTSTLA), 219–239 (VEFSAGPFALLFLAEYTNILF), 256–276 (PQLFTINLMTKTMILTTLFLW), and 297–317 (YLPLTLAMYLLNTSTSMALCG).

It belongs to the complex I subunit 1 family.

It is found in the mitochondrion inner membrane. The catalysed reaction is a ubiquinone + NADH + 5 H(+)(in) = a ubiquinol + NAD(+) + 4 H(+)(out). Core subunit of the mitochondrial membrane respiratory chain NADH dehydrogenase (Complex I) that is believed to belong to the minimal assembly required for catalysis. Complex I functions in the transfer of electrons from NADH to the respiratory chain. The immediate electron acceptor for the enzyme is believed to be ubiquinone. The sequence is that of NADH-ubiquinone oxidoreductase chain 1 (MT-ND1) from Lycodon semicarinatus (Ryukyu odd-tooth snake).